The following is a 979-amino-acid chain: Chromosome partition protein Smc (979 aa).

Residue 33–40 (PNGSGKSN) coordinates ATP. A coiled-coil region spans residues 169–400 (SKYKLDKEEA…INILKQQFEN (232 aa)). The 120-residue stretch at 419–538 (DGYIGLASEL…DNVDNANRIA (120 aa)) folds into the SMC hinge domain. Coiled coils occupy residues 572–716 (ILNY…HSDS) and 750–818 (SLDL…DKII).

The protein belongs to the SMC family. As to quaternary structure, homodimer.

It is found in the cytoplasm. Functionally, required for chromosome condensation and partitioning. The protein is Chromosome partition protein Smc of Mesomycoplasma hyorhinis (Mycoplasma hyorhinis).